The primary structure comprises 445 residues: MREILHLQAGQCGNQIGAKFWEVISDEHGIDPSGTYHGDNELQLERINVYYNEATGGKYVPRAVLVDLEPGTMDSVRSGAFGQIFRPDNFVFGQSGAGNNWAKGHYTEGAELVDSVLDVVRKEAESCDCLQGFQLTHSLGGGTGSGMGTLLISKIREEYPDRIMNTFSVVPSPKVSDTVVEPYNATLSVHQLVENTDETYCIDNEALYDICFRTLKLTTPTYGDLNHLVSATMSGVTTCLRFPGQLNADLRKLAVNMVPFPRLHFFMPGFAPLTSRGSQQYRALTVPELTQQMFDAKNMMAACDPRHGRYLTVAAIFRGRMSMKEVDEQMLNVQNKNSSYFVEWIPNNVKTAVCDIPPRGLKMSSTFIGNSTAIQELFKRMSEQFTAMFRRKAFLHWYTGEGMDEMEFTEAESNMNDLVSEYQQYQDATAEEEGEGEEEGDEEVA.

The MREI motif signature appears at 1-4 (MREI). GTP contacts are provided by Gln-11, Glu-69, Ser-138, Gly-142, Thr-143, Gly-144, Asn-204, and Asn-226. Glu-69 provides a ligand contact to Mg(2+). The tract at residues 421–445 (EYQQYQDATAEEEGEGEEEGDEEVA) is disordered. Residues 429–445 (TAEEEGEGEEEGDEEVA) show a composition bias toward acidic residues. At Glu-438 the chain carries 5-glutamyl polyglutamate.

Belongs to the tubulin family. Dimer of alpha and beta chains. A typical microtubule is a hollow water-filled tube with an outer diameter of 25 nm and an inner diameter of 15 nM. Alpha-beta heterodimers associate head-to-tail to form protofilaments running lengthwise along the microtubule wall with the beta-tubulin subunit facing the microtubule plus end conferring a structural polarity. Microtubules usually have 13 protofilaments but different protofilament numbers can be found in some organisms and specialized cells. Mg(2+) is required as a cofactor. Post-translationally, some glutamate residues at the C-terminus are polyglycylated, resulting in polyglycine chains on the gamma-carboxyl group. Glycylation is mainly limited to tubulin incorporated into axonemes (cilia and flagella) whereas glutamylation is prevalent in neuronal cells, centrioles, axonemes, and the mitotic spindle. Both modifications can coexist on the same protein on adjacent residues, and lowering polyglycylation levels increases polyglutamylation, and reciprocally. The precise function of polyglycylation is still unclear. Some glutamate residues at the C-terminus are polyglutamylated, resulting in polyglutamate chains on the gamma-carboxyl group. Polyglutamylation plays a key role in microtubule severing by spastin (SPAST). SPAST preferentially recognizes and acts on microtubules decorated with short polyglutamate tails: severing activity by SPAST increases as the number of glutamates per tubulin rises from one to eight, but decreases beyond this glutamylation threshold. In terms of tissue distribution, brain.

It is found in the cytoplasm. The protein localises to the cytoskeleton. Functionally, tubulin is the major constituent of microtubules, a cylinder consisting of laterally associated linear protofilaments composed of alpha- and beta-tubulin heterodimers. Microtubules grow by the addition of GTP-tubulin dimers to the microtubule end, where a stabilizing cap forms. Below the cap, tubulin dimers are in GDP-bound state, owing to GTPase activity of alpha-tubulin. The sequence is that of Tubulin beta chain from Pseudopleuronectes americanus (Winter flounder).